The following is a 329-amino-acid chain: Beta-ketoacyl-[acyl-carrier-protein] synthase III (329 aa).

Catalysis depends on residues cysteine 113 and histidine 255. The ACP-binding stretch occupies residues 256 to 260; the sequence is QANQR. Residue asparagine 285 is part of the active site.

This sequence belongs to the thiolase-like superfamily. FabH family. As to quaternary structure, homodimer.

The protein resides in the cytoplasm. The enzyme catalyses malonyl-[ACP] + acetyl-CoA + H(+) = 3-oxobutanoyl-[ACP] + CO2 + CoA. It functions in the pathway lipid metabolism; fatty acid biosynthesis. Catalyzes the condensation reaction of fatty acid synthesis by the addition to an acyl acceptor of two carbons from malonyl-ACP. Catalyzes the first condensation reaction which initiates fatty acid synthesis and may therefore play a role in governing the total rate of fatty acid production. Possesses both acetoacetyl-ACP synthase and acetyl transacylase activities. Its substrate specificity determines the biosynthesis of branched-chain and/or straight-chain of fatty acids. The polypeptide is Beta-ketoacyl-[acyl-carrier-protein] synthase III (Chlorobium luteolum (strain DSM 273 / BCRC 81028 / 2530) (Pelodictyon luteolum)).